A 367-amino-acid polypeptide reads, in one-letter code: Holliday junction branch migration complex subunit RuvB (367 aa).

The large ATPase domain (RuvB-L) stretch occupies residues 2-196 (TDEPLTDRPP…FGFTARLDFY (195 aa)). Residues Leu35, Arg36, Gly77, Lys80, Thr81, Thr82, 143 to 145 (EDF), Arg186, Tyr196, and Arg233 contribute to the ATP site. Thr81 is a binding site for Mg(2+). The tract at residues 197-267 (EPADLERIVH…VAQAALAVYE (71 aa)) is small ATPAse domain (RuvB-S). Positions 270 to 367 (EHGLDRLDRA…IDRDAGEPTA (98 aa)) are head domain (RuvB-H). DNA is bound by residues Arg325 and Arg330.

This sequence belongs to the RuvB family. As to quaternary structure, homohexamer. Forms an RuvA(8)-RuvB(12)-Holliday junction (HJ) complex. HJ DNA is sandwiched between 2 RuvA tetramers; dsDNA enters through RuvA and exits via RuvB. An RuvB hexamer assembles on each DNA strand where it exits the tetramer. Each RuvB hexamer is contacted by two RuvA subunits (via domain III) on 2 adjacent RuvB subunits; this complex drives branch migration. In the full resolvosome a probable DNA-RuvA(4)-RuvB(12)-RuvC(2) complex forms which resolves the HJ.

The protein resides in the cytoplasm. The catalysed reaction is ATP + H2O = ADP + phosphate + H(+). Its function is as follows. The RuvA-RuvB-RuvC complex processes Holliday junction (HJ) DNA during genetic recombination and DNA repair, while the RuvA-RuvB complex plays an important role in the rescue of blocked DNA replication forks via replication fork reversal (RFR). RuvA specifically binds to HJ cruciform DNA, conferring on it an open structure. The RuvB hexamer acts as an ATP-dependent pump, pulling dsDNA into and through the RuvAB complex. RuvB forms 2 homohexamers on either side of HJ DNA bound by 1 or 2 RuvA tetramers; 4 subunits per hexamer contact DNA at a time. Coordinated motions by a converter formed by DNA-disengaged RuvB subunits stimulates ATP hydrolysis and nucleotide exchange. Immobilization of the converter enables RuvB to convert the ATP-contained energy into a lever motion, pulling 2 nucleotides of DNA out of the RuvA tetramer per ATP hydrolyzed, thus driving DNA branch migration. The RuvB motors rotate together with the DNA substrate, which together with the progressing nucleotide cycle form the mechanistic basis for DNA recombination by continuous HJ branch migration. Branch migration allows RuvC to scan DNA until it finds its consensus sequence, where it cleaves and resolves cruciform DNA. This chain is Holliday junction branch migration complex subunit RuvB, found in Acidothermus cellulolyticus (strain ATCC 43068 / DSM 8971 / 11B).